The following is a 930-amino-acid chain: Semaphorin-6C (930 aa).

The N-terminal stretch at 1–24 (MPRAPHFMPLLLLLLLLSLPHTQA) is a signal peptide. At 25-604 (AFPQDPLPLL…ASASRSVPIP (580 aa)) the chain is on the extracellular side. The Sema domain occupies 30–516 (PLPLLISDLQ…FSGCIVYLPL (487 aa)). N70 carries an N-linked (GlcNAc...) asparagine glycan. Disulfide bonds link C111-C121, C139-C148, C262-C373, and C287-C332. N-linked (GlcNAc...) asparagine glycosylation is present at N286. N-linked (GlcNAc...) asparagine glycosylation occurs at N437. Cystine bridges form between C479/C510, C519/C537, C525/C570, and C529/C545. Residues 554–593 (TDVDQAGNQESMEHGDCQDGATGSQSGPGDSAYGVRRDLP) are disordered. A helical membrane pass occupies residues 605–625 (LLLASVAAAFALGASVSGLLV). Over 626–930 (SCACRRAHRR…AVPNGGRFNF (305 aa)) the chain is Cytoplasmic. 4 disordered regions span residues 654–674 (LARLHGGGPEPPPPSKDGDAV), 716–761 (GDPW…PGQA), 775–882 (HGPQ…PGKH), and 908–930 (SLKPPLVGPSSRQAVPNGGRFNF). Low complexity predominate over residues 829 to 844 (ASAPARPALSAPAPRL).

This sequence belongs to the semaphorin family. In terms of tissue distribution, in adult tissues, expressed only in skeletal muscle.

Its subcellular location is the cell membrane. In terms of biological role, shows growth cone collapsing activity on dorsal root ganglion (DRG) neurons in vitro. May be a stop signal for the DRG neurons in their target areas, and possibly also for other neurons. May also be involved in the maintenance and remodeling of neuronal connections. This Homo sapiens (Human) protein is Semaphorin-6C (SEMA6C).